Reading from the N-terminus, the 372-residue chain is Phospho-N-acetylmuramoyl-pentapeptide-transferase (372 aa).

10 consecutive transmembrane segments (helical) span residues arginine 25 to isoleucine 45, threonine 73 to leucine 93, valine 98 to isoleucine 118, phenylalanine 134 to glutamine 154, serine 176 to isoleucine 196, glycine 211 to serine 231, leucine 251 to histidine 271, valine 275 to methionine 295, isoleucine 300 to isoleucine 320, and glutamine 349 to leucine 369.

It belongs to the glycosyltransferase 4 family. MraY subfamily. It depends on Mg(2+) as a cofactor.

The protein localises to the cell inner membrane. It catalyses the reaction UDP-N-acetyl-alpha-D-muramoyl-L-alanyl-gamma-D-glutamyl-meso-2,6-diaminopimeloyl-D-alanyl-D-alanine + di-trans,octa-cis-undecaprenyl phosphate = di-trans,octa-cis-undecaprenyl diphospho-N-acetyl-alpha-D-muramoyl-L-alanyl-D-glutamyl-meso-2,6-diaminopimeloyl-D-alanyl-D-alanine + UMP. The protein operates within cell wall biogenesis; peptidoglycan biosynthesis. Functionally, catalyzes the initial step of the lipid cycle reactions in the biosynthesis of the cell wall peptidoglycan: transfers peptidoglycan precursor phospho-MurNAc-pentapeptide from UDP-MurNAc-pentapeptide onto the lipid carrier undecaprenyl phosphate, yielding undecaprenyl-pyrophosphoryl-MurNAc-pentapeptide, known as lipid I. This is Phospho-N-acetylmuramoyl-pentapeptide-transferase from Acinetobacter baumannii (strain AB0057).